The sequence spans 669 residues: DNA ligase (669 aa).

NAD(+) is bound by residues Asp-35 to Asp-39, Ser-84 to Leu-85, and Glu-114. The active-site N6-AMP-lysine intermediate is Lys-116. NAD(+)-binding residues include Arg-137, Glu-171, Lys-287, and Lys-311. Residues Cys-405, Cys-408, Cys-423, and Cys-428 each coordinate Zn(2+). The BRCT domain occupies Asp-591 to Lys-669.

Belongs to the NAD-dependent DNA ligase family. LigA subfamily. Mg(2+) is required as a cofactor. Mn(2+) serves as cofactor.

The enzyme catalyses NAD(+) + (deoxyribonucleotide)n-3'-hydroxyl + 5'-phospho-(deoxyribonucleotide)m = (deoxyribonucleotide)n+m + AMP + beta-nicotinamide D-nucleotide.. DNA ligase that catalyzes the formation of phosphodiester linkages between 5'-phosphoryl and 3'-hydroxyl groups in double-stranded DNA using NAD as a coenzyme and as the energy source for the reaction. It is essential for DNA replication and repair of damaged DNA. This Bacillus velezensis (strain DSM 23117 / BGSC 10A6 / LMG 26770 / FZB42) (Bacillus amyloliquefaciens subsp. plantarum) protein is DNA ligase.